A 182-amino-acid polypeptide reads, in one-letter code: Crossover junction endodeoxyribonuclease RuvC (182 aa).

Residues aspartate 7, glutamate 69, and aspartate 141 contribute to the active site. 3 residues coordinate Mg(2+): aspartate 7, glutamate 69, and aspartate 141.

This sequence belongs to the RuvC family. Homodimer which binds Holliday junction (HJ) DNA. The HJ becomes 2-fold symmetrical on binding to RuvC with unstacked arms; it has a different conformation from HJ DNA in complex with RuvA. In the full resolvosome a probable DNA-RuvA(4)-RuvB(12)-RuvC(2) complex forms which resolves the HJ. The cofactor is Mg(2+).

Its subcellular location is the cytoplasm. It catalyses the reaction Endonucleolytic cleavage at a junction such as a reciprocal single-stranded crossover between two homologous DNA duplexes (Holliday junction).. The RuvA-RuvB-RuvC complex processes Holliday junction (HJ) DNA during genetic recombination and DNA repair. Endonuclease that resolves HJ intermediates. Cleaves cruciform DNA by making single-stranded nicks across the HJ at symmetrical positions within the homologous arms, yielding a 5'-phosphate and a 3'-hydroxyl group; requires a central core of homology in the junction. The consensus cleavage sequence is 5'-(A/T)TT(C/G)-3'. Cleavage occurs on the 3'-side of the TT dinucleotide at the point of strand exchange. HJ branch migration catalyzed by RuvA-RuvB allows RuvC to scan DNA until it finds its consensus sequence, where it cleaves and resolves the cruciform DNA. The chain is Crossover junction endodeoxyribonuclease RuvC from Albidiferax ferrireducens (strain ATCC BAA-621 / DSM 15236 / T118) (Rhodoferax ferrireducens).